A 557-amino-acid polypeptide reads, in one-letter code: Formate--tetrahydrofolate ligase (557 aa).

An ATP-binding site is contributed by 66–73; it reads TPAGEGKS.

This sequence belongs to the formate--tetrahydrofolate ligase family.

The enzyme catalyses (6S)-5,6,7,8-tetrahydrofolate + formate + ATP = (6R)-10-formyltetrahydrofolate + ADP + phosphate. It functions in the pathway one-carbon metabolism; tetrahydrofolate interconversion. The polypeptide is Formate--tetrahydrofolate ligase (Lactobacillus johnsonii (strain CNCM I-12250 / La1 / NCC 533)).